Consider the following 798-residue polypeptide: Probable serine/threonine-protein kinase DDB_G0276461 (798 aa).

The region spanning 54 to 324 is the Protein kinase domain; it reads VTEVKLVAEG…DLLNYLNEIR (271 aa). Residues 60-68 and lysine 82 each bind ATP; that span reads VAEGGFGFV. The active-site Proton acceptor is aspartate 185. Disordered stretches follow at residues 330-538, 553-645, and 659-798; these read GLQT…NGNF, TNGS…SYNN, and SSAS…FGIL. 6 stretches are compositionally biased toward low complexity: residues 335–406, 429–490, 506–538, 557–603, 611–642, and 659–678; these read SSNN…NTPN, SNSN…NNNN, PSPSNSNSNVIINNTNSSGKNNQNKSNSGNGNF, TNFE…INNS, SSGSLPQSRQSSFNSTPQQQQQQFNSSTNSGS, and SSASISSSGGVSNNSDNSWN. The segment covering 679–697 has biased composition (polar residues); it reads VTLTPSQSNKNSTGNLKPL. Positions 698-716 are enriched in low complexity; it reads NNNNNNNNNNNNRFANNTN. Positions 717–769 are enriched in polar residues; sequence SSRDYSFDFSSPNTSNNNDFGSFVQPSSSSSLNTTHFSKPNYNVNLNQTTSMT. Low complexity predominate over residues 770–790; sequence NNYNNNNYNNNNNSNNNNNNS.

Belongs to the protein kinase superfamily. Ser/Thr protein kinase family.

The catalysed reaction is L-seryl-[protein] + ATP = O-phospho-L-seryl-[protein] + ADP + H(+). It carries out the reaction L-threonyl-[protein] + ATP = O-phospho-L-threonyl-[protein] + ADP + H(+). The chain is Probable serine/threonine-protein kinase DDB_G0276461 from Dictyostelium discoideum (Social amoeba).